We begin with the raw amino-acid sequence, 199 residues long: Charged multivesicular body protein 1b (199 aa).

Positions 26–48 form a coiled coil; that stretch reads DKEEKAEKAKIKKAIQKGNMEVA. Residues 132–156 form an interaction with IST1 region; it reads MEDTMSSTTTLTTPQNQVDMLLQEM. The interval 167-199 is disordered; sequence ELPQGQTGSVGTSVASAEQDELSQRLARLRDQV. Over residues 170-182 the composition is skewed to polar residues; it reads QGQTGSVGTSVAS. The segment at 174–199 is interaction with SPAST; sequence GSVGTSVASAEQDELSQRLARLRDQV. The stretch at 178–199 forms a coiled coil; sequence TSVASAEQDELSQRLARLRDQV. An interaction with VPS4A, MITD1 and STAMBP region spans residues 180–196; that stretch reads VASAEQDELSQRLARLR. The tract at residues 180-199 is interaction with VTA1; the sequence is VASAEQDELSQRLARLRDQV. Residues 183–199 are interaction with VPS4B; that stretch reads AEQDELSQRLARLRDQV. Residues 186–196 carry the MIT-interacting motif motif; it reads DELSQRLARLR.

This sequence belongs to the SNF7 family. Probable peripherally associated component of the endosomal sorting required for transport complex III (ESCRT-III). ESCRT-III components are thought to multimerize to form a flat lattice on the perimeter membrane of the endosome. Several assembly forms of ESCRT-III may exist that interact and act sequentially. Interacts with CHMP1A. Interacts with VTA1; the interaction probably involves the open conformation of CHMP1B. Interacts with CHMP2A. Interacts with VPS4A; the interaction is direct. Interacts with VPS4B; the interaction is direct. Interacts with SPAST (via MIT domain); the interaction is direct. Interacts with IST1. Interacts with MITD1. Interacts with STAMBP. Widely expressed. Expressed in pancreas, kidney, skeletal muscle, liver, lung, placenta and brain.

The protein localises to the cytoplasm. Its subcellular location is the cytosol. It is found in the endosome. The protein resides in the late endosome membrane. Probable peripherally associated component of the endosomal sorting required for transport complex III (ESCRT-III) which is involved in multivesicular bodies (MVBs) formation and sorting of endosomal cargo proteins into MVBs. MVBs contain intraluminal vesicles (ILVs) that are generated by invagination and scission from the limiting membrane of the endosome and mostly are delivered to lysosomes enabling degradation of membrane proteins, such as stimulated growth factor receptors, lysosomal enzymes and lipids. The MVB pathway appears to require the sequential function of ESCRT-O, -I,-II and -III complexes. ESCRT-III proteins mostly dissociate from the invaginating membrane before the ILV is released. The ESCRT machinery also functions in topologically equivalent membrane fission events, such as the terminal stages of cytokinesis and the budding of enveloped viruses (HIV-1 and other lentiviruses). ESCRT-III proteins are believed to mediate the necessary vesicle extrusion and/or membrane fission activities, possibly in conjunction with the AAA ATPase VPS4. Involved in cytokinesis. Involved in recruiting VPS4A and/or VPS4B and SPAST to the midbody of dividing cells. Involved in HIV-1 p6- and p9-dependent virus release. This Homo sapiens (Human) protein is Charged multivesicular body protein 1b (CHMP1B).